We begin with the raw amino-acid sequence, 177 residues long: SPbeta prophage-derived uncharacterized N-acetyltransferase YokL (177 aa).

One can recognise an N-acetyltransferase domain in the interval 11 to 170 (LTLRAIQPED…DGICFGMTRE (160 aa)).

It belongs to the acetyltransferase family.

The chain is SPbeta prophage-derived uncharacterized N-acetyltransferase YokL (yokL) from Bacillus subtilis (strain 168).